The following is a 134-amino-acid chain: Large ribosomal subunit protein eL32 (134 aa).

The protein belongs to the eukaryotic ribosomal protein eL32 family.

The chain is Large ribosomal subunit protein eL32 (RpL32) from Drosophila melanogaster (Fruit fly).